A 223-amino-acid polypeptide reads, in one-letter code: Chorismate dehydratase (223 aa).

It belongs to the MqnA/MqnD family. MqnA subfamily.

It catalyses the reaction chorismate = 3-[(1-carboxyvinyl)-oxy]benzoate + H2O. It participates in quinol/quinone metabolism; menaquinone biosynthesis. Its function is as follows. Catalyzes the dehydration of chorismate into 3-[(1-carboxyvinyl)oxy]benzoate, a step in the biosynthesis of menaquinone (MK, vitamin K2). This chain is Chorismate dehydratase, found in Campylobacter jejuni subsp. jejuni serotype O:23/36 (strain 81-176).